Reading from the N-terminus, the 708-residue chain is Leukotoxin translocation ATP-binding protein LktB (708 aa).

Residues 1–126 (MEANHQRNDL…ACYQGQLILV (126 aa)) enclose the Peptidase C39 domain. In terms of domain architecture, ABC transmembrane type-1 spans 155-437 (FLETLIVSIF…LAQLWQDFQQ (283 aa)). 5 helical membrane-spanning segments follow: residues 159–179 (LIVS…FQVV), 192–212 (LNII…LSGL), 270–290 (ALTS…MWYY), 296–316 (LVIL…SPIL), and 389–409 (VMVI…LSIG). The ABC transporter domain maps to 469–704 (ISFKNIRFRY…SNGLYSYLHQ (236 aa)). 503-510 (GRSGSGKS) contacts ATP.

The protein belongs to the ABC transporter superfamily. Protein-1 exporter (TC 3.A.1.109) family. Homodimer.

It localises to the cell inner membrane. The catalysed reaction is ATP + H2O + proteinSide 1 = ADP + phosphate + proteinSide 2.. Part of the ABC transporter complex LktBD involved in leukotoxin export. Transmembrane domains (TMD) form a pore in the inner membrane and the ATP-binding domain (NBD) is responsible for energy generation. This is Leukotoxin translocation ATP-binding protein LktB (lktB) from Bibersteinia trehalosi (Pasteurella trehalosi).